Reading from the N-terminus, the 330-residue chain is Aspartate--ammonia ligase (330 aa).

Belongs to the class-II aminoacyl-tRNA synthetase family. AsnA subfamily.

It localises to the cytoplasm. It carries out the reaction L-aspartate + NH4(+) + ATP = L-asparagine + AMP + diphosphate + H(+). It functions in the pathway amino-acid biosynthesis; L-asparagine biosynthesis; L-asparagine from L-aspartate (ammonia route): step 1/1. This chain is Aspartate--ammonia ligase, found in Shigella dysenteriae serotype 1 (strain Sd197).